The primary structure comprises 582 residues: Phosphoglucomutase, cytoplasmic (582 aa).

Residues Arg25 and Ser124 each contribute to the alpha-D-glucose 1,6-bisphosphate site. The Phosphoserine intermediate role is filled by Ser124. Residues Ser124, Asp300, Asp302, and Asp304 each contribute to the Mg(2+) site. Residue Ser124 is modified to Phosphoserine. The alpha-D-glucose 1,6-bisphosphate site is built by Asp304, Arg305, Thr368, Glu387, Ser389, and Lys400.

Belongs to the phosphohexose mutase family. As to quaternary structure, monomer. Requires Mg(2+) as cofactor.

It localises to the cytoplasm. It carries out the reaction alpha-D-glucose 1-phosphate = alpha-D-glucose 6-phosphate. The enzyme catalyses O-phospho-L-seryl-[protein] + alpha-D-glucose 1-phosphate = alpha-D-glucose 1,6-bisphosphate + L-seryl-[protein]. It catalyses the reaction alpha-D-glucose 1,6-bisphosphate + L-seryl-[protein] = O-phospho-L-seryl-[protein] + alpha-D-glucose 6-phosphate. Functionally, catalyzes the reversible isomerization of alpha-D-glucose 1-phosphate to alpha-D-glucose 6-phosphate. The mechanism proceeds via the intermediate compound alpha-D-glucose 1,6-bisphosphate. This enzyme participates in both the breakdown and synthesis of glucose. The chain is Phosphoglucomutase, cytoplasmic (PGM1) from Pisum sativum (Garden pea).